A 321-amino-acid chain; its full sequence is tRNA uridine(34) hydroxylase (321 aa).

One can recognise a Rhodanese domain in the interval 135-233 (DDPLTLVIDT…YLEEVPENES (99 aa)). C193 functions as the Cysteine persulfide intermediate in the catalytic mechanism.

The protein belongs to the TrhO family.

It carries out the reaction uridine(34) in tRNA + AH2 + O2 = 5-hydroxyuridine(34) in tRNA + A + H2O. Its function is as follows. Catalyzes oxygen-dependent 5-hydroxyuridine (ho5U) modification at position 34 in tRNAs. The chain is tRNA uridine(34) hydroxylase from Prochlorococcus marinus (strain SARG / CCMP1375 / SS120).